A 427-amino-acid chain; its full sequence is UDP-N-acetylglucosamine--N-acetylmuramyl-(pentapeptide) pyrophosphoryl-undecaprenol N-acetylglucosamine transferase (427 aa).

Residues 29-31 (TGG), N141, R177, S205, I258, and Q303 each bind UDP-N-acetyl-alpha-D-glucosamine. A disordered region spans residues 408 to 427 (SLHPIPDSRFPIRTSAGGAQ).

Belongs to the glycosyltransferase 28 family. MurG subfamily.

The protein localises to the cell inner membrane. It catalyses the reaction di-trans,octa-cis-undecaprenyl diphospho-N-acetyl-alpha-D-muramoyl-L-alanyl-D-glutamyl-meso-2,6-diaminopimeloyl-D-alanyl-D-alanine + UDP-N-acetyl-alpha-D-glucosamine = di-trans,octa-cis-undecaprenyl diphospho-[N-acetyl-alpha-D-glucosaminyl-(1-&gt;4)]-N-acetyl-alpha-D-muramoyl-L-alanyl-D-glutamyl-meso-2,6-diaminopimeloyl-D-alanyl-D-alanine + UDP + H(+). It participates in cell wall biogenesis; peptidoglycan biosynthesis. Functionally, cell wall formation. Catalyzes the transfer of a GlcNAc subunit on undecaprenyl-pyrophosphoryl-MurNAc-pentapeptide (lipid intermediate I) to form undecaprenyl-pyrophosphoryl-MurNAc-(pentapeptide)GlcNAc (lipid intermediate II). The protein is UDP-N-acetylglucosamine--N-acetylmuramyl-(pentapeptide) pyrophosphoryl-undecaprenol N-acetylglucosamine transferase of Xanthomonas campestris pv. campestris (strain 8004).